A 699-amino-acid chain; its full sequence is Putative inactive kinesin-like protein KIN-7B (699 aa).

The region spanning 1–170 is the Kinesin motor domain; the sequence is MRAIQKKSLC…LLFGSCAKEV (170 aa). The stretch at 179–247 forms a coiled coil; it reads VMSDKALVKH…QSRLQDLLQS (69 aa). The disordered stretch occupies residues 249–345; the sequence is GDHDLNRQVQ…VNSRHSRPSG (97 aa). Low complexity predominate over residues 264 to 275; the sequence is RSPPSVGMPPSV. The span at 276–298 shows a compositional bias: basic and acidic residues; that stretch reads SRDDSSQVSHDDSDLYKEVRCIE. Polar residues predominate over residues 313–338; it reads GESSSPQDSNMNSGLHGNDSNASVNS.

Belongs to the TRAFAC class myosin-kinesin ATPase superfamily. Kinesin family. KIN-7 subfamily.

The polypeptide is Putative inactive kinesin-like protein KIN-7B (Oryza sativa subsp. japonica (Rice)).